Here is a 1149-residue protein sequence, read N- to C-terminus: Beta-alanine-activating enzyme (1149 aa).

ATP contacts are provided by residues Thr-178–Lys-186, Asp-408, Arg-422, and Lys-543. The region spanning Ala-570 to Thr-646 is the Carrier domain. At Ser-605 the chain carries O-(pantetheine 4'-phosphoryl)serine. The interval Pro-653–Ser-683 is disordered.

The protein belongs to the ATP-dependent AMP-binding enzyme family.

Covalently binds beta-alanine in an ATP-dependent manner to form a thioester bond with its phosphopantetheine group and transfers it to an, as yet, unknown acceptor. May be required for a post-translational protein modification or for post-transcriptional modification of an RNA. In Danio rerio (Zebrafish), this protein is Beta-alanine-activating enzyme (aasdh).